Here is a 413-residue protein sequence, read N- to C-terminus: Multifunctional CCA protein (413 aa).

ATP-binding residues include G8 and R11. Positions 8 and 11 each coordinate CTP. Residues D21 and D23 each contribute to the Mg(2+) site. Residues R91, R143, and R146 each contribute to the ATP site. CTP contacts are provided by R91, R143, and R146. One can recognise an HD domain in the interval 232-333; that stretch reads TGVHVMMVVD…VRLFERSDAL (102 aa).

The protein belongs to the tRNA nucleotidyltransferase/poly(A) polymerase family. Bacterial CCA-adding enzyme type 1 subfamily. Monomer. Can also form homodimers and oligomers. Mg(2+) serves as cofactor. Requires Ni(2+) as cofactor.

It carries out the reaction a tRNA precursor + 2 CTP + ATP = a tRNA with a 3' CCA end + 3 diphosphate. The enzyme catalyses a tRNA with a 3' CCA end + 2 CTP + ATP = a tRNA with a 3' CCACCA end + 3 diphosphate. Functionally, catalyzes the addition and repair of the essential 3'-terminal CCA sequence in tRNAs without using a nucleic acid template. Adds these three nucleotides in the order of C, C, and A to the tRNA nucleotide-73, using CTP and ATP as substrates and producing inorganic pyrophosphate. tRNA 3'-terminal CCA addition is required both for tRNA processing and repair. Also involved in tRNA surveillance by mediating tandem CCA addition to generate a CCACCA at the 3' terminus of unstable tRNAs. While stable tRNAs receive only 3'-terminal CCA, unstable tRNAs are marked with CCACCA and rapidly degraded. This Burkholderia cenocepacia (strain HI2424) protein is Multifunctional CCA protein.